A 430-amino-acid polypeptide reads, in one-letter code: MTTLTLNTSLLSSCRILAAFSGGLDSTVLLHQLVLWRERHPDVTLRAIHIHHGLSPHADSWVRHCETVCERWQVPLVVERVTLADNGLGIEAHAREARYRAFAQTLLPGEVLATAQHLDDQCETFLLALKRGSGPAGLSAMGERSPFAGTLLLRPLLRETRKTLEQWAVRHGLCWIEDESNQDDAYDRNFLRLRALPLLQQRWPHFPAAVARSATLCAEQERLLDELLASDLTDCITAEGTLRLSPLMSMSDVRRAAILRRWLAMRNAPMPSRDALERIWQEVALARDDASPCLRFGDREIRRYQSQLWWIKSVAGQHETTVAWPVWQTPLALPAGLGTVQLVPGGELRRPREEESVSIRFKAPGVLHIVGRNGGRKLKKIWQEQGIPPWRRDTTPLLFYGETLIAAAGVFVTREGAAEDKEGVSLVWHA.

Residue 21 to 26 (SGGLDS) coordinates ATP.

Belongs to the tRNA(Ile)-lysidine synthase family.

Its subcellular location is the cytoplasm. The catalysed reaction is cytidine(34) in tRNA(Ile2) + L-lysine + ATP = lysidine(34) in tRNA(Ile2) + AMP + diphosphate + H(+). Its function is as follows. Ligates lysine onto the cytidine present at position 34 of the AUA codon-specific tRNA(Ile) that contains the anticodon CAU, in an ATP-dependent manner. Cytidine is converted to lysidine, thus changing the amino acid specificity of the tRNA from methionine to isoleucine. The chain is tRNA(Ile)-lysidine synthase from Salmonella newport (strain SL254).